We begin with the raw amino-acid sequence, 357 residues long: Protein Wnt-9b (357 aa).

A signal peptide spans 1 to 22 (MRPPPALALAGLCLLALPAAAA). Cystine bridges form between Cys-89-Cys-100, Cys-135-Cys-143, Cys-145-Cys-162, Cys-210-Cys-224, Cys-212-Cys-219, Cys-291-Cys-316, Cys-305-Cys-311, Cys-315-Cys-355, Cys-331-Cys-346, Cys-333-Cys-343, and Cys-338-Cys-339. Asn-99 carries N-linked (GlcNAc...) asparagine glycosylation. Ser-216 carries the O-palmitoleoyl serine; by PORCN lipid modification.

Belongs to the Wnt family. As to quaternary structure, forms a soluble 1:1 complex with AFM; this prevents oligomerization and is required for prolonged biological activity. The complex with AFM may represent the physiological form in body fluids. Component of the Wnt-Fzd-LRP5-LRP6 signaling complex that contains a WNT protein, a FZD protein and LRP5 or LRP6. Interacts directly in the complex with LRP6. Interacts with PKD1 (via extracellular domain). Palmitoleoylation is required for efficient binding to frizzled receptors. Depalmitoleoylation leads to Wnt signaling pathway inhibition. In terms of tissue distribution, moderately expressed in fetal kidney and adult kidney. Also found in brain.

The protein localises to the secreted. Its subcellular location is the extracellular space. It is found in the extracellular matrix. Its function is as follows. Ligand for members of the frizzled family of seven transmembrane receptors. Functions in the canonical Wnt/beta-catenin signaling pathway. Required for normal embryonic kidney development, and for normal development of the urogenital tract, including uterus and part of the oviduct and the upper vagina in females, and epididymis and vas deferens in males. Activates a signaling cascade in the metanephric mesenchyme that induces tubulogenesis. Acts upstream of WNT4 in the signaling pathways that mediate development of kidney tubules and the Muellerian ducts. Plays a role in cranofacial development and is required for normal fusion of the palate during embryonic development. This chain is Protein Wnt-9b (WNT9B), found in Homo sapiens (Human).